Here is a 417-residue protein sequence, read N- to C-terminus: Serine hydroxymethyltransferase (417 aa).

Residues Leu121 and 125–127 (GHL) each bind (6S)-5,6,7,8-tetrahydrofolate. At Lys229 the chain carries N6-(pyridoxal phosphate)lysine. Position 355–357 (355–357 (SPF)) interacts with (6S)-5,6,7,8-tetrahydrofolate.

This sequence belongs to the SHMT family. As to quaternary structure, homodimer. Pyridoxal 5'-phosphate is required as a cofactor.

The protein resides in the cytoplasm. The catalysed reaction is (6R)-5,10-methylene-5,6,7,8-tetrahydrofolate + glycine + H2O = (6S)-5,6,7,8-tetrahydrofolate + L-serine. Its pathway is one-carbon metabolism; tetrahydrofolate interconversion. It participates in amino-acid biosynthesis; glycine biosynthesis; glycine from L-serine: step 1/1. Catalyzes the reversible interconversion of serine and glycine with tetrahydrofolate (THF) serving as the one-carbon carrier. This reaction serves as the major source of one-carbon groups required for the biosynthesis of purines, thymidylate, methionine, and other important biomolecules. Also exhibits THF-independent aldolase activity toward beta-hydroxyamino acids, producing glycine and aldehydes, via a retro-aldol mechanism. The sequence is that of Serine hydroxymethyltransferase from Tolumonas auensis (strain DSM 9187 / NBRC 110442 / TA 4).